The primary structure comprises 79 residues: Conotoxin Vi6.9 (79 aa).

Residues 1–22 (MKLTCMVIITVLFLTASQLITA) form the signal peptide. The propeptide occupies 23–47 (DYSRDQRQYRAVRLGDEMRNFKGAR). 3 disulfide bridges follow: cysteine 49–cysteine 62, cysteine 56–cysteine 67, and cysteine 61–cysteine 77. 4-hydroxyproline occurs at positions 60 and 63.

Belongs to the conotoxin O1 superfamily. As to expression, expressed by the venom duct.

The protein resides in the secreted. In terms of biological role, ion channel inhibitor that inhibits the increase in intracellular calcium upon depolarization in DRG neurons. In vivo, both intraperitoneal and intracranial injections into mice induce hyperactivity. This is Conotoxin Vi6.9 from Conus virgo (Virgin cone).